The following is a 1195-amino-acid chain: Phosphatidylinositol-3,5-bisphosphate 3-phosphatase MTMR4 (1195 aa).

At serine 8 the chain carries Phosphoserine. A Myotubularin phosphatase domain is found at 153-570 (EHIRCRQEAE…RALHLWTAVY (418 aa)). 3 residues coordinate a 1,2-diacyl-sn-glycero-3-phospho-(1D-myo-inositol-3,5-bisphosphate): asparagine 320, asparagine 345, and isoleucine 346. Residues asparagine 320, asparagine 345, and isoleucine 346 each coordinate a 1,2-diacyl-sn-glycero-3-phospho-(1D-myo-inositol-3-phosphate). Residue cysteine 407 is the Phosphocysteine intermediate of the active site. Residues serine 408, aspartate 409, glycine 410, tryptophan 411, aspartate 412, arginine 413, lysine 449, and arginine 453 each coordinate a 1,2-diacyl-sn-glycero-3-phospho-(1D-myo-inositol-3,5-bisphosphate). 6 residues coordinate a 1,2-diacyl-sn-glycero-3-phospho-(1D-myo-inositol-3-phosphate): serine 408, aspartate 409, glycine 410, tryptophan 411, aspartate 412, and arginine 413. Arginine 453 contributes to the a 1,2-diacyl-sn-glycero-3-phospho-(1D-myo-inositol-3-phosphate) binding site. 2 positions are modified to phosphoserine: serine 610 and serine 629. Disordered regions lie at residues 645 to 756 (EPWH…EHCP), 780 to 800 (ESSQNSPTGTPQQAQPDSMLG), and 827 to 877 (DPST…LLEN). The segment covering 720 to 729 (PEIKVLEETK) has biased composition (basic and acidic residues). Composition is skewed to polar residues over residues 780–795 (ESSQNSPTGTPQQAQP) and 831–854 (DFLNQDPSGSVASISHQEQLSSVP). A PY-motif; substrate motif for NEDD4 motif is present at residues 1004–1008 (VPPLY). Residues 1023–1055 (HRLRQIEAGYKQEVEQLRRQVRELQMRLDIRHC) are a coiled coil. The FYVE-type zinc-finger motif lies at 1114 to 1174 (DHMASHCYNC…VCNSCYEHIQ (61 aa)). Residues cysteine 1120, cysteine 1123, cysteine 1136, cysteine 1139, cysteine 1144, cysteine 1147, cysteine 1166, and cysteine 1169 each coordinate Zn(2+).

It belongs to the protein-tyrosine phosphatase family. Non-receptor class myotubularin subfamily. As to quaternary structure, homooligomeric. Forms MTMR3:MTMR4 heterooligomers; regulates the localization of both proteins. The MTMR3:MTMR4 heterooligomer can also recruit both CEP55 and PLK1; occurs during early mitosis, regulates the phosphorylation of CEP55 by PLK1 and its recruitment to the midbody where it can mediate cell abscission. Interacts with SMAD2 and SMAD3; negatively regulates TGF-beta signaling through SMAD2 and SMAD3 dephosphorylation and retention in endosomes. Interacts with SMAD1; negatively regulates BMP signaling through SMAD1 dephosphorylation and retention in endosomes. Post-translationally, ubiquitinated. Ubiquitination by NEDD4 probably leads to proteasomal degradation. In terms of processing, phosphorylated by CDK1 during mitosis. Expressed in brain, heart, kidney, spleen, liver, colon, testis, muscle, placenta, thyroid gland, pancreas, ovary, prostate, skin, peripheral blood, and bone marrow.

Its subcellular location is the early endosome membrane. It localises to the recycling endosome membrane. The protein localises to the late endosome membrane. The protein resides in the cytoplasmic vesicle. It is found in the phagosome membrane. It carries out the reaction a 1,2-diacyl-sn-glycero-3-phospho-(1D-myo-inositol-3-phosphate) + H2O = a 1,2-diacyl-sn-glycero-3-phospho-(1D-myo-inositol) + phosphate. It catalyses the reaction a 1,2-diacyl-sn-glycero-3-phospho-(1D-myo-inositol-3,5-bisphosphate) + H2O = a 1,2-diacyl-sn-glycero-3-phospho-(1D-myo-inositol-5-phosphate) + phosphate. The catalysed reaction is 1,2-dioctanoyl-sn-glycero-3-phospho-(1-D-myo-inositol-3-phosphate) + H2O = 1,2-dioctanoyl-sn-glycero-3-phospho-(1D-myo-inositol) + phosphate. The enzyme catalyses 1,2-dioctanoyl-sn-glycero-3-phospho-(1D-myo-inositol-3,5-bisphosphate) + H2O = 1,2-dioctanoyl-sn-glycero-3-phospho-(1D-myo-inositol-5-phosphate) + phosphate. The phosphatidylinositol-3-phosphate phosphatase activity is inhibited by vanadate. In terms of biological role, lipid phosphatase that specifically dephosphorylates the D-3 position of phosphatidylinositol 3-phosphate and phosphatidylinositol 3,5-bisphosphate, generating phosphatidylinositol and phosphatidylinositol 5-phosphate. Decreases the levels of phosphatidylinositol 3-phosphate, a phospholipid found in cell membranes where it acts as key regulator of both cell signaling and intracellular membrane traffic, in a subset of endosomal membranes to negatively regulate both endocytic recycling and trafficking and/or maturation of endosomes toward lysosomes. Through phosphatidylinositol 3-phosphate turnover in phagosome membranes regulates phagocytosis and phagosome maturation. By decreasing phosphatidylinositol 3-monophosphate (PI3P) levels in immune cells it can also regulate the innate immune response. Beside its lipid phosphatase activity, can also function as a molecular adapter to regulate midbody abscission during mitotic cytokinesis. Can also negatively regulate TGF-beta and BMP signaling through Smad proteins dephosphorylation and retention in endosomes. This Homo sapiens (Human) protein is Phosphatidylinositol-3,5-bisphosphate 3-phosphatase MTMR4.